Consider the following 390-residue polypeptide: 1-deoxy-D-xylulose 5-phosphate reductoisomerase (390 aa).

The NADPH site is built by Thr10, Gly11, Ser12, Val13, and Asn124. 1-deoxy-D-xylulose 5-phosphate is bound at residue Lys125. NADPH is bound at residue Glu126. A Mn(2+)-binding site is contributed by Asp150. Ser151, Glu152, Ser181, and His204 together coordinate 1-deoxy-D-xylulose 5-phosphate. Glu152 provides a ligand contact to Mn(2+). Residue Gly210 coordinates NADPH. Positions 217, 222, 223, and 226 each coordinate 1-deoxy-D-xylulose 5-phosphate. Mn(2+) is bound at residue Glu226.

Belongs to the DXR family. The cofactor is Mg(2+). Mn(2+) serves as cofactor.

The enzyme catalyses 2-C-methyl-D-erythritol 4-phosphate + NADP(+) = 1-deoxy-D-xylulose 5-phosphate + NADPH + H(+). It functions in the pathway isoprenoid biosynthesis; isopentenyl diphosphate biosynthesis via DXP pathway; isopentenyl diphosphate from 1-deoxy-D-xylulose 5-phosphate: step 1/6. Catalyzes the NADPH-dependent rearrangement and reduction of 1-deoxy-D-xylulose-5-phosphate (DXP) to 2-C-methyl-D-erythritol 4-phosphate (MEP). The polypeptide is 1-deoxy-D-xylulose 5-phosphate reductoisomerase (Janthinobacterium sp. (strain Marseille) (Minibacterium massiliensis)).